The sequence spans 161 residues: Zinc finger A20 and AN1 domain-containing stress-associated protein 4 (161 aa).

The A20-type zinc-finger motif lies at 10 to 44 (PEGHRLCVNNCGFFGSSATMNLCSNCYGDLCLKQQ). Positions 16, 20, 32, and 35 each coordinate Zn(2+). Basic and acidic residues predominate over residues 76 to 85 (TTKKTEEKKP). Residues 76–99 (TTKKTEEKKPIQIPTEQPSPPQRP) are disordered. The segment at 96–142 (PQRPNRCTVCRKRVGLTGFMCRCGTTFCGSHRYPEVHGCTFDFKSAG) adopts an AN1-type zinc-finger fold. Zn(2+) is bound by residues Cys-102, Cys-105, Cys-116, Cys-118, Cys-123, His-126, His-132, and Cys-134.

Functionally, may be involved in environmental stress response. The polypeptide is Zinc finger A20 and AN1 domain-containing stress-associated protein 4 (SAP4) (Arabidopsis thaliana (Mouse-ear cress)).